The sequence spans 805 residues: MATDRLTRVHSLRERLDETLSANRNEILALLSRIEGKGKGILQHHQVIAEFEEIPEESRQKLTDGAFGEVLRSTQEAIVLPPWVALAVRPRPGVWEYLRVNVHALVVEVLQPAEYLRFKEELVDGSSNGNFVLELDFEPFTASFPRPTLNKSIGNGVQFLNRHLSAKLFHDKESLHPLLEFLRLHSVKGKTLMLNDRIQNPDALQHVLRKAEEYLGTVPPETPYSAFEHKFQEIGLERGWGDNAERVLESIQLLLDLLEAPDPCTLETFLGRIPMVFNVVILSPHGYFAQDNVLGYPDTGGQVVYILDQVRALENEMLHRIKQQGLDIVPRILIITRLLPDAVGTTCGQRLEKVFGTEHSHILRVPFRTENGIVRKWISRFEVWPYLETYTEDVAHELAKELQGKPDLIVGNYSDGNIVASLLAHKLGVTQCTIAHALEKTKYPESDIYWKKLEERYHFSCQFTADLFAMNHTDFIITSTFQEIAGSKDTVGQYESHTAFTLPGLYRVVHGIDVFDPKFNIVSPGADQTIYFPHTETSRRLTSFHTEIEELLYSSVENEEHICVLKDRSKPIIFTMARLDRVKNITGLVEWYGKNAKLRELVNLVVVAGDRRKESKDLEEKAEMKKMYSLIETYKLNGQFRWISSQMNRVRNGELYRVIADTKGAFVQPAVYEAFGLTVVEAMTCGLPTFATCNGGPAEIIVHGKSGFHIDPYHGDRAADLLVEFFEKVKVDPSHWDKISQAGLQRIEEKYTWQIYSQRLLTLTGVYGFWKHVSNLDRRESRRYLEMFYALKYRKLAESVPLAVE.

The tract at residues Met-275–Thr-752 is GT-B glycosyltransferase.

This sequence belongs to the glycosyltransferase 1 family. Plant sucrose synthase subfamily.

The enzyme catalyses an NDP-alpha-D-glucose + D-fructose = a ribonucleoside 5'-diphosphate + sucrose + H(+). Sucrose-cleaving enzyme that provides UDP-glucose and fructose for various metabolic pathways. This Vigna radiata var. radiata (Mung bean) protein is Sucrose synthase (SS1).